Reading from the N-terminus, the 230-residue chain is Ion-translocating oxidoreductase complex subunit E (230 aa).

The next 5 membrane-spanning stretches (helical) occupy residues 22 to 42 (LLGL…LGLG), 63 to 83 (TPAE…VSAV), 86 to 106 (LINA…PLIV), 125 to 145 (WLSA…MFVL), and 182 to 202 (PFLL…MLAV).

It belongs to the NqrDE/RnfAE family. As to quaternary structure, the complex is composed of six subunits: RsxA, RsxB, RsxC, RsxD, RsxE and RsxG.

It localises to the cell inner membrane. Part of a membrane-bound complex that couples electron transfer with translocation of ions across the membrane. Required to maintain the reduced state of SoxR. The polypeptide is Ion-translocating oxidoreductase complex subunit E (Salmonella paratyphi A (strain ATCC 9150 / SARB42)).